Here is a 303-residue protein sequence, read N- to C-terminus: GTPase Era (303 aa).

One can recognise an Era-type G domain in the interval 8–176 (YCGFIAIVGR…ASIVRKHMPE (169 aa)). The G1 stretch occupies residues 16–23 (GRPNVGKS). 16–23 (GRPNVGKS) contacts GTP. Positions 42–46 (QTTRH) are G2. The G3 stretch occupies residues 63–66 (DTPG). Residues 63 to 67 (DTPGL) and 125 to 128 (NKVD) each bind GTP. Residues 125-128 (NKVD) form a G4 region. The segment at 155–157 (ISA) is G5. Positions 207-284 (LGEELPYSVT…HLELWVKVKS (78 aa)) constitute a KH type-2 domain.

Belongs to the TRAFAC class TrmE-Era-EngA-EngB-Septin-like GTPase superfamily. Era GTPase family. As to quaternary structure, monomer.

It localises to the cytoplasm. It is found in the cell inner membrane. An essential GTPase that binds both GDP and GTP, with rapid nucleotide exchange. Plays a role in 16S rRNA processing and 30S ribosomal subunit biogenesis and possibly also in cell cycle regulation and energy metabolism. This chain is GTPase Era, found in Yersinia enterocolitica serotype O:8 / biotype 1B (strain NCTC 13174 / 8081).